Consider the following 271-residue polypeptide: Histone chaperone asf-1 (271 aa).

The segment at 152–271 (KWDSEASAPP…PKQQGMAMAQ (120 aa)) is disordered. Acidic residues-rich tracts occupy residues 168 to 185 (PEAD…DELA) and 211 to 258 (IEED…EMEI).

This sequence belongs to the ASF1 family. Interacts with histone H3 and histone H4.

It localises to the nucleus. In terms of biological role, histone chaperone that facilitates histone deposition and histone exchange and removal during nucleosome assembly and disassembly. The chain is Histone chaperone asf-1 (asf-1) from Neurospora crassa (strain ATCC 24698 / 74-OR23-1A / CBS 708.71 / DSM 1257 / FGSC 987).